The chain runs to 154 residues: MINEIQIAAFNAAYAKTVDSDAMEQWPTFFTKDCHYRVTNVDNHAEGLAAGIVWADSQDMLTDRISALREANIYERHRYRHILGLPSIQSGDATQASASTPFMVLRIMHTGETEVFASGEYLDKFTTIDGKLRLQERIAVCDSTVTDTLMALPL.

Belongs to the bacterial ring-hydroxylating dioxygenase beta subunit family. Heterotetramer composed of 2 alpha (TphA2I and TphA2II) and 2 beta (TphA3I and TphA3II) subunits. Part of a multicomponent enzyme system composed of a reductase (TphA1I or TphA1II) and a two-subunit oxygenase component (TphA2I or TphA2II and TphA3I or TphA3II). Fe cation is required as a cofactor.

It catalyses the reaction terephthalate + NADH + O2 + H(+) = (3S,4R)-3,4-dihydroxycyclohexa-1,5-diene-1,4-dicarboxylate + NAD(+). Inhibited by EDTA. Component of the terephthalate 1,2-dioxygenase multicomponent enzyme system which catalyzes the dioxygenation of terephthalate (TER/TPA) to 1,2-dihydroxy-3,5-cyclohexadiene-1,4-dicarboxylic acid (DCD). It can also use 2,5-dicarboxypyridine (PDC) and 1,4-napthalenedicarboxylic acid (NDC) as substrates, and preferentially uses NADPH which is the physiological electron donor. The protein is Terephthalate 1,2-dioxygenase, terminal oxygenase component subunit beta 1 (tphA3I) of Comamonas sp.